The chain runs to 344 residues: Fructose-1,6-bisphosphatase class 1 (344 aa).

Residues E92, D115, L117, and D118 each contribute to the Mg(2+) site. Residues 118–121, N211, Y244, and K274 contribute to the substrate site; that span reads DGSS. E280 provides a ligand contact to Mg(2+).

The protein belongs to the FBPase class 1 family. Homotetramer. It depends on Mg(2+) as a cofactor.

It is found in the cytoplasm. The enzyme catalyses beta-D-fructose 1,6-bisphosphate + H2O = beta-D-fructose 6-phosphate + phosphate. It participates in carbohydrate biosynthesis; gluconeogenesis. This is Fructose-1,6-bisphosphatase class 1 from Aeromonas salmonicida (strain A449).